A 798-amino-acid chain; its full sequence is ABC transporter G family member 4 (798 aa).

A disordered region spans residues Met-1 to Gln-51. A compositionally biased stretch (basic and acidic residues) spans Ile-12–Ser-29. Residues Arg-30–Asn-41 show a composition bias toward polar residues. The stretch at Asn-34–Thr-83 forms a coiled coil. Low complexity predominate over residues Gln-42–Gln-51. Residues Ile-211–Pro-464 form the ABC transporter domain. ATP is bound at residue Gly-253–Ser-260. 7 helical membrane-spanning segments follow: residues Val-540–Phe-560, Leu-579–Val-599, Ile-628–Leu-648, Ile-656–Met-676, Phe-687–Ile-707, Ser-713–Ile-733, and Ser-771–Tyr-791. The ABC transmembrane type-2 domain maps to Val-540 to Phe-793.

Belongs to the ABC transporter superfamily. ABCG family. Eye pigment precursor importer (TC 3.A.1.204) subfamily.

It is found in the membrane. The sequence is that of ABC transporter G family member 4 (abcG4) from Dictyostelium discoideum (Social amoeba).